A 161-amino-acid chain; its full sequence is Small ribosomal subunit protein uS19 (161 aa).

Over residues 1–19 the composition is skewed to basic residues; sequence MARQKKYSGKGGARKKNKQ. The segment at 1 to 26 is disordered; it reads MARQKKYSGKGGARKKNKQKQNVAPR.

The protein belongs to the universal ribosomal protein uS19 family.

Its function is as follows. Protein S19 forms a complex with S13 that binds strongly to the 16S ribosomal RNA. The chain is Small ribosomal subunit protein uS19 from Methanococcus maripaludis (strain DSM 14266 / JCM 13030 / NBRC 101832 / S2 / LL).